A 164-amino-acid polypeptide reads, in one-letter code: Pathogenesis-related protein PRB1-2 (164 aa).

The first 24 residues, 1 to 24 (MQTPKLAILLALAMAAAMVNLSQA), serve as a signal peptide directing secretion. At glutamine 25 the chain carries Pyrrolidone carboxylic acid. One can recognise an SCP domain in the interval 34-152 (PHNAARSAVG…NRGVFITCNY (119 aa)). Cystine bridges form between cysteine 68-cysteine 140, cysteine 113-cysteine 119, and cysteine 135-cysteine 150.

This sequence belongs to the CRISP family.

In terms of biological role, probably involved in the defense reaction of plants against pathogens. This chain is Pathogenesis-related protein PRB1-2, found in Hordeum vulgare (Barley).